The sequence spans 2769 residues: Teneurin-4 (2769 aa).

Residues 1–22 (MDVKERKPYRSLTRRRDAERRY) are compositionally biased toward basic and acidic residues. Positions 1-45 (MDVKERKPYRSLTRRRDAERRYTSSSADSEEGKAPQKSYSSSETL) are disordered. The 341-residue stretch at 1-341 (MDVKERKPYR…KPSKYCNWKC (341 aa)) folds into the Teneurin N-terminal domain. Residues 1–345 (MDVKERKPYR…YCNWKCAALS (345 aa)) are Cytoplasmic-facing. A Phosphoserine modification is found at Ser-124. Positions 130–233 (RLWGRSTRSG…PPAGGAQEPA (104 aa)) are disordered. Residues 134 to 155 (RSTRSGRSSCLSSRANSNLTLT) are compositionally biased toward low complexity. Basic and acidic residues predominate over residues 156–166 (DTEHENTETDH). At Thr-178 the chain carries Phosphothreonine. The span at 187–211 (HTPNQHHAASINSLNRGNFTPRSNP) shows a compositional bias: polar residues. The chain crosses the membrane as a helical span at residues 346–366 (AIVISATLVILLAYFVAMHLF). Topologically, residues 367-2769 (GLNWHLQPME…FMRQSEMGRR (2403 aa)) are extracellular. Residues 400–426 (PSGGTGLETPDRKGKGTTEGKPSSFFP) form a disordered region. The span at 408 to 417 (TPDRKGKGTT) shows a compositional bias: basic and acidic residues. N-linked (GlcNAc...) asparagine glycosylation occurs at Asn-467. The tract at residues 507 to 526 (ARSLEGTPRQSRGTVPPSSH) is disordered. Residues 514–526 (PRQSRGTVPPSSH) are compositionally biased toward polar residues. EGF-like domains follow at residues 562–593 (SVDNCPSNCYGNGDCISGTCHCFLGFLGPDCG), 594–624 (RASCPVLCSGNGQYMKGRCLCHSGWKGAECD), 626–658 (PTNQCIDVACSNHGTCITGTCICNPGYKGESCE), 659–690 (EVDCMDPTCSGRGVCVRGECHCSVGWGGTNCE), 692–725 (PRATCLDQCSGHGTFLPDTGLCSCDPSWTGHDCS), 726–757 (IEICAADCGGHGVCVGGTCRCEDGWMGAACDQ), 758–787 (RACHPRCAEHGTCRDGKCECSPGWNGEHCT), and 788–831 (IAHY…AGCD). 22 cysteine pairs are disulfide-bonded: Cys-566–Cys-576, Cys-570–Cys-581, Cys-583–Cys-592, Cys-601–Cys-612, Cys-614–Cys-623, Cys-630–Cys-641, Cys-635–Cys-646, Cys-648–Cys-657, Cys-662–Cys-673, Cys-667–Cys-678, Cys-680–Cys-689, Cys-700–Cys-713, Cys-715–Cys-724, Cys-729–Cys-739, Cys-733–Cys-744, Cys-746–Cys-755, Cys-760–Cys-770, Cys-764–Cys-775, Cys-777–Cys-786, Cys-800–Cys-810, Cys-804–Cys-819, and Cys-821–Cys-830. 2 N-linked (GlcNAc...) asparagine glycosylation sites follow: Asn-940 and Asn-1259. 5 NHL repeats span residues 1216-1259 (SCPS…PSGN), 1264-1308 (LELR…IKST), 1334-1378 (TRCG…NGII), 1393-1444 (LSCD…VAGR), and 1523-1566 (CFSG…IRKN). A YD 1 repeat occupies 1576–1595 (YELSSPIDQELYLFDTTGKH). Asn-1609 is a glycosylation site (N-linked (GlcNAc...) asparagine). YD repeat units lie at residues 1612-1632 (YTGDGDITLITDNNGNMVNVR), 1675-1694 (YHGNSGLLATKSNENGWTTF), and 1695-1717 (YEYDSFGRLTNVTFPTGQVSSFR). N-linked (GlcNAc...) asparagine glycosylation is found at Asn-1705, Asn-1741, Asn-1799, and Asn-1884. YD repeat units follow at residues 1887-1906 (YSPGGYIAGIQRGIMSERME), 1928-1946 (YLEKSMVLLLHSQRQYIFE), 1947-1967 (FDKNDRLSSVTMPNVARQTLE), 1974-1991 (YYRNIYQPPEGNASVIQD), 1992-2013 (FTEDGHLLHTFYLGTGRRVIYK), 2014-2031 (YGKLSKLAETLYDTTKVS), 2034-2054 (YDETAGMLKTINLQNEGFTCT), 2057-2077 (YRQIGPLIDRQIFRFTEEGMV), 2085-2104 (YDNSFRVTSMQAVINETPLP), 2110-2127 (YDDVSGKTEQFGKFGVIY), 2128-2154 (YDINQIITTAVMTHTKHFDAYGRMKEV), 2156-2169 (YEIFRSLMYWMTVQ), 2170-2193 (YDNMGRVVKKELKVGPYANTTRYS), 2196-2216 (YDADGQLQTVSINDKPLWRYS), 2217-2237 (YDLNGNLHLLSPGNSARLTPL), 2239-2259 (YDIRDRITRLGDVQYKMDEDG), 2271-2291 (YNSAGLLIKAYNRAGSWSVRY), and 2293-2313 (YDGLGRRVSSKSSHSHHLQFF). A glycan (N-linked (GlcNAc...) asparagine) is linked at Asn-1985. Asn-2188 carries an N-linked (GlcNAc...) asparagine glycan. Asn-2328 carries an N-linked (GlcNAc...) asparagine glycan. A YD 23 repeat occupies 2339–2380 (YDLQGHLFAMELSSGDEFYIACDNIGTPLAVFSGTGLMIKQI). Asn-2646 carries N-linked (GlcNAc...) asparagine glycosylation.

It belongs to the tenascin family. Teneurin subfamily. As to quaternary structure, homodimer; disulfide-linked. May also form heterodimer with either TENM1 or TENM2 or TENM3.

The protein localises to the cell membrane. It is found in the cell projection. The protein resides in the nucleus. It localises to the cytoplasm. Involved in neural development, regulating the establishment of proper connectivity within the nervous system. Plays a role in the establishment of the anterior-posterior axis during gastrulation. Regulates the differentiation and cellular process formation of oligodendrocytes and myelination of small-diameter axons in the central nervous system (CNS). Promotes activation of focal adhesion kinase. May function as a cellular signal transducer. In Homo sapiens (Human), this protein is Teneurin-4 (TENM4).